A 224-amino-acid polypeptide reads, in one-letter code: Prothoracicotropic hormone (224 aa).

The N-terminal stretch at 1–29 (MITRPIILVILCYAILMIVQSFVPKAVAL) is a signal peptide. 3 disulfides stabilise this stretch: Cys-132–Cys-169, Cys-155–Cys-211, and Cys-163–Cys-213. Residue Asn-156 is glycosylated (N-linked (GlcNAc...) asparagine).

In terms of assembly, homodimer; disulfide-linked. PTTH is synthesized by two dorsolateral neurosecretory cells of the Bombyx brain.

Its function is as follows. PTTH is a brain secretory polypeptide of insects which stimulates the prothoracic glands to produce and release ecdysone, the steroid essential to insect development. Peptides P2K and P6K are presumed to be cleaved post-translationally and may play some unknown physiologically or developmentally important functions. In Bombyx mori (Silk moth), this protein is Prothoracicotropic hormone.